The sequence spans 283 residues: Short-chain dehydrogenase cctT (283 aa).

The first 20 residues, 1–20 (MLKTVLITGCSHGGLGAAMA), serve as a signal peptide directing secretion. Ile7, Thr33, Lys39, Glu55, and Asn83 together coordinate NADP(+). A glycan (N-linked (GlcNAc...) asparagine) is linked at Asn131. Ser133 (proton donor) is an active-site residue. Residues Tyr147, Arg151, Val180, and Thr182 each coordinate NADP(+). Tyr147 (proton acceptor) is an active-site residue.

Belongs to the short-chain dehydrogenases/reductases (SDR) family.

Its function is as follows. Short-chain dehydrogenase; part of the gene cluster that mediates the biosynthesis of the mycotoxin cyclochlorotine, a hepatotoxic and carcinogenic cyclic chlorinated pentapeptide. The function of cctT within the pathway, if any, remains undetermined. The NRPS cctN initially catalyzes the condensation of L-serine (Ser), Pro, L-2-aminobutyrate (2Abu), Ser, and beta-Phe in this order to produce isocyclotine. After the dichlorination of Pro2 catalyzed by cctP2 to produce isocyclochlorotine, the cctO-mediated transacylation of isocyclochlorotine can furnish cyclochlorotine. The subsequent hydroxylation of cyclochlorotine by cctR yields hydroxycyclochlorotine as the final product. CctP1 probably acts as a phenylalanine aminomutase and provides the uncommon building block beta-Phe. Furthermore, 2Abu can be synthesized from threonine by one of the threonine dehydratases and transaminases localized outside of the cluster. The functions of the remaining proteins encoded by the cluster, cctM and cctT, have not been identified yet. The polypeptide is Short-chain dehydrogenase cctT (Talaromyces islandicus (Penicillium islandicum)).